Consider the following 235-residue polypeptide: Probable tetraspanin tspB (235 aa).

The Cytoplasmic segment spans residues 1 to 23; that stretch reads MVDTTNLIPNTPRYLKVPLIAFN. A helical membrane pass occupies residues 24 to 44; that stretch reads TILWVLGLVLVIIGSIGVSFF. Topologically, residues 45 to 68 are extracellular; the sequence is SNFKDFTKVSKASAALSNLTTGAP. Asn62 carries an N-linked (GlcNAc...) asparagine glycan. The chain crosses the membrane as a helical span at residues 69–89; the sequence is AGVLVIGIFFVILTVIGCFVA. At 90–93 the chain is on the cytoplasmic side; that stretch reads GKEK. A helical transmembrane segment spans residues 94 to 114; the sequence is LVGLVIYTMLMLIILVALIGV. The Extracellular portion of the chain corresponds to 115-200; it reads GGKALTLHND…ISSNLYLVGA (86 aa). N-linked (GlcNAc...) asparagine glycans are attached at residues Asn143 and Asn159. Residues 201 to 221 traverse the membrane as a helical segment; that stretch reads AAVSIGVIEFICMLFALFLII. The Cytoplasmic portion of the chain corresponds to 222–235; the sequence is RICRAPRTKSYDYQ.

Belongs to the tetraspanin (TM4SF) family.

Its subcellular location is the membrane. The sequence is that of Probable tetraspanin tspB (tspB) from Dictyostelium discoideum (Social amoeba).